The sequence spans 311 residues: MEFHHVSVLLNECIENLNIKPDGVYVDCTMGGAGHSKEIVKKLSDKGLFIGFDQDKNAISTAKERLSEYESRVKFVHSNFENIKEELEKIGVYKIDGVLADLGVSSHQLDEADRGFSYMQDAPLDMRMDVRCEFSAYDVVNTYTEDELTKIIKDYGEDNWAKRIAKFIVEERANKPIETTGELVDVIKKAIPKKARIVGPHPAKRTFQAIRIEVNNELGVITKMINDASSIMNEGGRICIITFHSLEDRIVKNAFKHLASDCICPQHLPICQCDKESEVKIITRKPILPSEEEIEVNPRSRSAKLRVAEKI.

Residues 33–35, D53, F80, D101, and Q108 each bind S-adenosyl-L-methionine; that span reads AGH.

The protein belongs to the methyltransferase superfamily. RsmH family.

The protein localises to the cytoplasm. The enzyme catalyses cytidine(1402) in 16S rRNA + S-adenosyl-L-methionine = N(4)-methylcytidine(1402) in 16S rRNA + S-adenosyl-L-homocysteine + H(+). Specifically methylates the N4 position of cytidine in position 1402 (C1402) of 16S rRNA. This Clostridioides difficile (strain 630) (Peptoclostridium difficile) protein is Ribosomal RNA small subunit methyltransferase H.